We begin with the raw amino-acid sequence, 236 residues long: LexA repressor (236 aa).

The H-T-H motif DNA-binding region spans 26–46 (FDEMKDALDLRSKSGIHRLII). Residues Ser157 and Lys195 each act as for autocatalytic cleavage activity in the active site.

Belongs to the peptidase S24 family. As to quaternary structure, homodimer.

It catalyses the reaction Hydrolysis of Ala-|-Gly bond in repressor LexA.. Represses a number of genes involved in the response to DNA damage (SOS response), including recA and lexA. In the presence of single-stranded DNA, RecA interacts with LexA causing an autocatalytic cleavage which disrupts the DNA-binding part of LexA, leading to derepression of the SOS regulon and eventually DNA repair. This chain is LexA repressor, found in Methylocella silvestris (strain DSM 15510 / CIP 108128 / LMG 27833 / NCIMB 13906 / BL2).